We begin with the raw amino-acid sequence, 216 residues long: Probable nicotinate-nucleotide adenylyltransferase (216 aa).

Belongs to the NadD family.

The catalysed reaction is nicotinate beta-D-ribonucleotide + ATP + H(+) = deamido-NAD(+) + diphosphate. It participates in cofactor biosynthesis; NAD(+) biosynthesis; deamido-NAD(+) from nicotinate D-ribonucleotide: step 1/1. Functionally, catalyzes the reversible adenylation of nicotinate mononucleotide (NaMN) to nicotinic acid adenine dinucleotide (NaAD). The protein is Probable nicotinate-nucleotide adenylyltransferase of Buchnera aphidicola subsp. Schizaphis graminum (strain Sg).